Reading from the N-terminus, the 62-residue chain is Cytochrome b-c1 complex subunit 6-2, mitochondrial (62 aa).

Intrachain disulfides connect C17–C59 and C31–C45.

It belongs to the UQCRH/QCR6 family. As to quaternary structure, component of the ubiquinol-cytochrome c oxidoreductase (cytochrome b-c1 complex, complex III, CIII), a multisubunit enzyme composed of 10 subunits. The complex is composed of 3 respiratory subunits cytochrome b (MT-CYB), cytochrome c1 (CYC1-1 or CYC1-2) and Rieske protein (UCR1-1 or UCR1-2), 2 core protein subunits MPPalpha1 (or MPPalpha2) and MPPB, and 5 low-molecular weight protein subunits QCR7-1 (or QCR7-2), UCRQ-1 (or UCRQ-2), QCR9, UCRY and probably QCR6-1 (or QCR6-2). The complex exists as an obligatory dimer and forms supercomplexes (SCs) in the inner mitochondrial membrane with NADH-ubiquinone oxidoreductase (complex I, CI), resulting in different assemblies (supercomplexes SCI(1)III(2) and SCI(2)III(4)).

It is found in the mitochondrion inner membrane. Functionally, component of the ubiquinol-cytochrome c oxidoreductase, a multisubunit transmembrane complex that is part of the mitochondrial electron transport chain which drives oxidative phosphorylation. The respiratory chain contains 3 multisubunit complexes succinate dehydrogenase (complex II, CII), ubiquinol-cytochrome c oxidoreductase (cytochrome b-c1 complex, complex III, CIII) and cytochrome c oxidase (complex IV, CIV), that cooperate to transfer electrons derived from NADH and succinate to molecular oxygen, creating an electrochemical gradient over the inner membrane that drives transmembrane transport and the ATP synthase. The cytochrome b-c1 complex catalyzes electron transfer from ubiquinol to cytochrome c, linking this redox reaction to translocation of protons across the mitochondrial inner membrane, with protons being carried across the membrane as hydrogens on the quinol. In the process called Q cycle, 2 protons are consumed from the matrix, 4 protons are released into the intermembrane space and 2 electrons are passed to cytochrome c. This chain is Cytochrome b-c1 complex subunit 6-2, mitochondrial (QCR6-2), found in Arabidopsis thaliana (Mouse-ear cress).